A 131-amino-acid chain; its full sequence is Small ribosomal subunit protein uS11 (131 aa).

The protein belongs to the universal ribosomal protein uS11 family. Part of the 30S ribosomal subunit. Interacts with proteins S7 and S18. Binds to IF-3.

In terms of biological role, located on the platform of the 30S subunit, it bridges several disparate RNA helices of the 16S rRNA. Forms part of the Shine-Dalgarno cleft in the 70S ribosome. This chain is Small ribosomal subunit protein uS11, found in Wigglesworthia glossinidia brevipalpis.